An 894-amino-acid chain; its full sequence is Translation factor GUF1 homolog, mitochondrial (894 aa).

The segment at 157-189 (EDEGLDGGPPPGMEAKKSSSSSSSNNVHSNCSD) is disordered. The segment covering 174 to 188 (SSSSSSSNNVHSNCS) has biased composition (low complexity). Residues 199–376 (ENIRNFCILA…RIVSEIPSPA (178 aa)) enclose the tr-type G domain. GTP is bound by residues 208-215 (AHIDSGKS), 269-273 (DTPGH), and 323-326 (NKID). The disordered stretch occupies residues 649-674 (DHDDCNDNGGSNSDDRSDRSGKNPPD).

Belongs to the TRAFAC class translation factor GTPase superfamily. Classic translation factor GTPase family. LepA subfamily.

It is found in the mitochondrion inner membrane. It carries out the reaction GTP + H2O = GDP + phosphate + H(+). Functionally, promotes mitochondrial protein synthesis. May act as a fidelity factor of the translation reaction, by catalyzing a one-codon backward translocation of tRNAs on improperly translocated ribosomes. Binds to mitochondrial ribosomes in a GTP-dependent manner. The protein is Translation factor GUF1 homolog, mitochondrial of Plasmodium knowlesi (strain H).